The chain runs to 343 residues: Sulfate/thiosulfate import ATP-binding protein CysA (343 aa).

An ABC transporter domain is found at 3–233 (ILIENISKTF…PATPFVMGFM (231 aa)). 35 to 42 (GPSGSGKS) provides a ligand contact to ATP.

This sequence belongs to the ABC transporter superfamily. Sulfate/tungstate importer (TC 3.A.1.6) family.

The protein localises to the plastid. The protein resides in the chloroplast. It catalyses the reaction sulfate(out) + ATP + H2O = sulfate(in) + ADP + phosphate + H(+). The enzyme catalyses thiosulfate(out) + ATP + H2O = thiosulfate(in) + ADP + phosphate + H(+). Part of the ABC transporter complex involved in sulfate/thiosulfate import. Responsible for energy coupling to the transport system. This is Sulfate/thiosulfate import ATP-binding protein CysA from Nephroselmis olivacea (Green alga).